The following is a 468-amino-acid chain: Efflux pump azaK (468 aa).

The disordered stretch occupies residues 1–30 (MTVHPPAVADETSPLLPSQDGPGHNGIVPA). Transmembrane regions (helical) follow at residues 43 to 65 (QVAL…FPFV), 80 to 100 (VGFY…MLMI), 112 to 132 (KPVL…FGFS), 135 to 155 (LGQM…VVTV), 174 to 194 (YFSL…GALC), and 207 to 227 (LPTV…LMFV). N-linked (GlcNAc...) asparagine glycosylation is present at Asn-228. 6 helical membrane passes run 257–277 (VLPV…YTAV), 296–316 (FYIS…LVLV), 329–349 (ILRG…GASV), 357–377 (VAFW…AMQL), 387–407 (VSPS…IISF), and 429–449 (PGFY…AFTL).

It belongs to the major facilitator superfamily.

Its subcellular location is the cell membrane. In terms of biological role, efflux pump that might be required for efficient secretion of azaphilones. In Aspergillus niger (strain ATCC 1015 / CBS 113.46 / FGSC A1144 / LSHB Ac4 / NCTC 3858a / NRRL 328 / USDA 3528.7), this protein is Efflux pump azaK.